The following is a 185-amino-acid chain: Ribosome-recycling factor (185 aa).

Belongs to the RRF family.

The protein resides in the cytoplasm. Functionally, responsible for the release of ribosomes from messenger RNA at the termination of protein biosynthesis. May increase the efficiency of translation by recycling ribosomes from one round of translation to another. This chain is Ribosome-recycling factor, found in Aeromonas hydrophila subsp. hydrophila (strain ATCC 7966 / DSM 30187 / BCRC 13018 / CCUG 14551 / JCM 1027 / KCTC 2358 / NCIMB 9240 / NCTC 8049).